Here is a 476-residue protein sequence, read N- to C-terminus: MSRFSGALQLTDIDDFITPAQECIKPIPINKKNSKSGAKISVQEDGYYEESGTGKQKLQKLEITLQDCLACSGCITSAEGVLITQQSQEELLKVLHENKKLKAEEDNNLSRTVVFSVATQPLISLAYRYKISVEETARHLAGYFRSLGADYVLSTKVADDLALLECRNEFLEKYRENNDLTMFSSSCPGWVCYAEKTHGNFILPHIATTRSPQQIMGVLVKQYLGKKLNLPASRIYHVTVMPCYDKKLEASREDFFSEVNASRDVDCVITSVEVEQMLLEVDQTLPAQEPADLDWPWWDERPELMVYSHESTYSGGYAEHVFRFAARELFNDARPIQLQIDQPRNRDLKEFFLEKDGIVLLRFAIANGFKNIQNLVQKLKRGKGSKFHFVEIMACPSGCINGGAQVRPISGQHVRELTQKLEELYTKLPRSQPDNIGTKKLYDDFFDGFGTDKSHNLLHTSYHSVDKLIPALNIKW.

Residues C23, C68, C71, C74, C187, C243, C395, and C399 each contribute to the [4Fe-4S] cluster site.

Belongs to the NARF family.

Its function is as follows. Component of the cytosolic iron-sulfur (Fe/S) protein assembly machinery. Required for maturation of extramitochondrial Fe/S proteins. The protein is Probable cytosolic Fe-S cluster assembly factor GF22738 of Drosophila ananassae (Fruit fly).